Reading from the N-terminus, the 504-residue chain is Anaerobic nitric oxide reductase transcription regulator NorR (504 aa).

A 4-aspartylphosphate modification is found at Asp-57. Residues 187–416 (MIGLSPGMTQ…LEHAIHRAVV (230 aa)) form the Sigma-54 factor interaction domain. Residues 215–222 (GETGTGKE) and 278–287 (ADNGTLFLDE) each bind ATP. Residues 479 to 498 (WAACARMLETDVANLHRLAK) constitute a DNA-binding region (H-T-H motif).

The protein operates within nitrogen metabolism; nitric oxide reduction. Required for the expression of anaerobic nitric oxide (NO) reductase, acts as a transcriptional activator for at least the norVW operon. Activation also requires sigma-54. The protein is Anaerobic nitric oxide reductase transcription regulator NorR of Escherichia coli (strain 55989 / EAEC).